The sequence spans 246 residues: Proteasome subunit alpha type-6-A (246 aa).

This sequence belongs to the peptidase T1A family. As to quaternary structure, component of the 20S core complex of the 26S proteasome. The 26S proteasome is composed of a core protease (CP), known as the 20S proteasome, capped at one or both ends by the 19S regulatory particle (RP/PA700). The 20S proteasome core is composed of 28 subunits that are arranged in four stacked rings, resulting in a barrel-shaped structure. The two end rings are each formed by seven alpha subunits, and the two central rings are each formed by seven beta subunits. The catalytic chamber with the active sites is on the inside of the barrel. As to expression, ubiquitous low levels, higher expression in siliques and flowers.

It is found in the cytoplasm. It localises to the nucleus. Functionally, the proteasome is a multicatalytic proteinase complex which is characterized by its ability to cleave peptides with Arg, Phe, Tyr, Leu, and Glu adjacent to the leaving group at neutral or slightly basic pH. The proteasome has an ATP-dependent proteolytic activity. The protein is Proteasome subunit alpha type-6-A (PAA1) of Arabidopsis thaliana (Mouse-ear cress).